The sequence spans 91 residues: Small ribosomal subunit protein uS19 (91 aa).

This sequence belongs to the universal ribosomal protein uS19 family.

Its function is as follows. Protein S19 forms a complex with S13 that binds strongly to the 16S ribosomal RNA. This Cupriavidus necator (strain ATCC 17699 / DSM 428 / KCTC 22496 / NCIMB 10442 / H16 / Stanier 337) (Ralstonia eutropha) protein is Small ribosomal subunit protein uS19.